Consider the following 419-residue polypeptide: Probable 3-isopropylmalate dehydratase large subunit (419 aa).

Residues C299, C359, and C362 each contribute to the [4Fe-4S] cluster site.

The protein belongs to the aconitase/IPM isomerase family. LeuC type 2 subfamily. As to quaternary structure, heterodimer of LeuC and LeuD. It depends on [4Fe-4S] cluster as a cofactor.

The catalysed reaction is (2R,3S)-3-isopropylmalate = (2S)-2-isopropylmalate. It functions in the pathway amino-acid biosynthesis; L-leucine biosynthesis; L-leucine from 3-methyl-2-oxobutanoate: step 2/4. Functionally, catalyzes the isomerization between 2-isopropylmalate and 3-isopropylmalate, via the formation of 2-isopropylmaleate. This Methanothermobacter thermautotrophicus (strain ATCC 29096 / DSM 1053 / JCM 10044 / NBRC 100330 / Delta H) (Methanobacterium thermoautotrophicum) protein is Probable 3-isopropylmalate dehydratase large subunit.